The primary structure comprises 251 residues: 3-deoxy-manno-octulosonate cytidylyltransferase (251 aa).

It belongs to the KdsB family.

The protein localises to the cytoplasm. It catalyses the reaction 3-deoxy-alpha-D-manno-oct-2-ulosonate + CTP = CMP-3-deoxy-beta-D-manno-octulosonate + diphosphate. The protein operates within nucleotide-sugar biosynthesis; CMP-3-deoxy-D-manno-octulosonate biosynthesis; CMP-3-deoxy-D-manno-octulosonate from 3-deoxy-D-manno-octulosonate and CTP: step 1/1. It participates in bacterial outer membrane biogenesis; lipopolysaccharide biosynthesis. In terms of biological role, activates KDO (a required 8-carbon sugar) for incorporation into bacterial lipopolysaccharide in Gram-negative bacteria. The protein is 3-deoxy-manno-octulosonate cytidylyltransferase of Chelativorans sp. (strain BNC1).